The primary structure comprises 304 residues: tRNA dimethylallyltransferase (304 aa).

10–17 provides a ligand contact to ATP; that stretch reads GPTASGKS. 12 to 17 contributes to the substrate binding site; sequence TASGKS. The segment at 35 to 38 is interaction with substrate tRNA; that stretch reads DSRQ.

The protein belongs to the IPP transferase family. Monomer. Requires Mg(2+) as cofactor.

The enzyme catalyses adenosine(37) in tRNA + dimethylallyl diphosphate = N(6)-dimethylallyladenosine(37) in tRNA + diphosphate. In terms of biological role, catalyzes the transfer of a dimethylallyl group onto the adenine at position 37 in tRNAs that read codons beginning with uridine, leading to the formation of N6-(dimethylallyl)adenosine (i(6)A). The sequence is that of tRNA dimethylallyltransferase from Gloeothece citriformis (strain PCC 7424) (Cyanothece sp. (strain PCC 7424)).